Here is a 231-residue protein sequence, read N- to C-terminus: MNRLMIVSLLGIATALGGCVNPPPKPNDPYYAPVLPRTPLPAAQNNGAIYQAGFEQNLYDDRKAFRVGDIITITLNEKTQASKKANSDIQKDSKTKMGLTSLFGSGMTTNNPIGGGDLSLSAEYGGSRDAKGDSQAGQSNSLTGSITVTVAEVLPNGILSVRGEKWMTLNTGNELVRIAGLVRADDIATDNTVSSTRVADARITYSGTGAFADASQPGWLDRFFLSPLWPF.

A signal peptide spans 1–18 (MNRLMIVSLLGIATALGG). Residue cysteine 19 is the site of N-palmitoyl cysteine attachment. Cysteine 19 carries the S-diacylglycerol cysteine lipid modification. Residues 118–141 (LSLSAEYGGSRDAKGDSQAGQSNS) form a disordered region.

The protein belongs to the FlgH family. The basal body constitutes a major portion of the flagellar organelle and consists of four rings (L,P,S, and M) mounted on a central rod.

It localises to the cell outer membrane. The protein localises to the bacterial flagellum basal body. Its function is as follows. Assembles around the rod to form the L-ring and probably protects the motor/basal body from shearing forces during rotation. The chain is Flagellar L-ring protein from Pseudomonas aeruginosa (strain LESB58).